Here is a 258-residue protein sequence, read N- to C-terminus: 5'-nucleotidase SurE (258 aa).

Residues D9, D10, S40, and N95 each contribute to the a divalent metal cation site.

This sequence belongs to the SurE nucleotidase family. Requires a divalent metal cation as cofactor.

It localises to the cytoplasm. The catalysed reaction is a ribonucleoside 5'-phosphate + H2O = a ribonucleoside + phosphate. Functionally, nucleotidase that shows phosphatase activity on nucleoside 5'-monophosphates. The polypeptide is 5'-nucleotidase SurE (Nitratiruptor sp. (strain SB155-2)).